The following is an 80-amino-acid chain: RNA-binding protein Hfq (80 aa).

A Sm domain is found at 10–69 (DPFLNTLRREHVPVSIYLVNGIKLQGQIESFDQYVVLLKNTVTQMVYKHAISTVVPARPV).

The protein belongs to the Hfq family. In terms of assembly, homohexamer.

Its function is as follows. RNA chaperone that binds small regulatory RNA (sRNAs) and mRNAs to facilitate mRNA translational regulation in response to envelope stress, environmental stress and changes in metabolite concentrations. Also binds with high specificity to tRNAs. The protein is RNA-binding protein Hfq of Azoarcus sp. (strain BH72).